We begin with the raw amino-acid sequence, 138 residues long: Putative pre-16S rRNA nuclease (138 aa).

This sequence belongs to the YqgF nuclease family.

It localises to the cytoplasm. Functionally, could be a nuclease involved in processing of the 5'-end of pre-16S rRNA. In Karelsulcia muelleri (strain GWSS) (Sulcia muelleri), this protein is Putative pre-16S rRNA nuclease.